Here is a 218-residue protein sequence, read N- to C-terminus: Probable transaldolase (218 aa).

The Schiff-base intermediate with substrate role is filled by Lys-83.

It belongs to the transaldolase family. Type 3B subfamily.

The protein resides in the cytoplasm. The enzyme catalyses D-sedoheptulose 7-phosphate + D-glyceraldehyde 3-phosphate = D-erythrose 4-phosphate + beta-D-fructose 6-phosphate. The protein operates within carbohydrate degradation; pentose phosphate pathway; D-glyceraldehyde 3-phosphate and beta-D-fructose 6-phosphate from D-ribose 5-phosphate and D-xylulose 5-phosphate (non-oxidative stage): step 2/3. Transaldolase is important for the balance of metabolites in the pentose-phosphate pathway. The sequence is that of Probable transaldolase from Kosmotoga olearia (strain ATCC BAA-1733 / DSM 21960 / TBF 19.5.1).